We begin with the raw amino-acid sequence, 367 residues long: 2-aminoethylphosphonate--pyruvate transaminase (367 aa).

Lys193 carries the N6-(pyridoxal phosphate)lysine modification.

Belongs to the class-V pyridoxal-phosphate-dependent aminotransferase family. PhnW subfamily. As to quaternary structure, homodimer. Requires pyridoxal 5'-phosphate as cofactor.

The catalysed reaction is (2-aminoethyl)phosphonate + pyruvate = phosphonoacetaldehyde + L-alanine. In terms of biological role, involved in phosphonate degradation. The chain is 2-aminoethylphosphonate--pyruvate transaminase from Vibrio cholerae serotype O1 (strain ATCC 39541 / Classical Ogawa 395 / O395).